Reading from the N-terminus, the 287-residue chain is Putative esterase/lipase HI_0193 (287 aa).

The AB hydrolase-1 domain occupies 47 to 273 (PVLIFIHGLF…SGHWVHAEKP (227 aa)). Catalysis depends on residues serine 119 and histidine 266.

Belongs to the DmpD/TodF/XylF esterase family.

The polypeptide is Putative esterase/lipase HI_0193 (Haemophilus influenzae (strain ATCC 51907 / DSM 11121 / KW20 / Rd)).